We begin with the raw amino-acid sequence, 132 residues long: Glycine cleavage system H protein (132 aa).

The region spanning 24–106 (LVRIGISAFA…HGEGWLLVVR (83 aa)) is the Lipoyl-binding domain. At lysine 65 the chain carries N6-lipoyllysine.

This sequence belongs to the GcvH family. As to quaternary structure, the glycine cleavage system is composed of four proteins: P, T, L and H. (R)-lipoate is required as a cofactor.

The glycine cleavage system catalyzes the degradation of glycine. The H protein shuttles the methylamine group of glycine from the P protein to the T protein. This is Glycine cleavage system H protein from Prochlorococcus marinus (strain MIT 9313).